The following is a 2399-amino-acid chain: Norsolorinic acid synthase (2399 aa).

A starter unit:ACP transacylase (SAT) domain region spans residues 10 to 247; it reads LVFGDQTYDF…RQIPIYVPAH (238 aa). The Ketosynthase family 3 (KS3) domain occupies 372–805; the sequence is KSKLAIVSMS…GGNTALLIED (434 aa). Active-site for beta-ketoacyl synthase activity residues include Cys544, His679, and His722. Residues 905 to 1192 form a malonyl-CoA:ACP transacylase (MAT) domain region; that stretch reads FAFTGQGSQY…LCGMIKNILG (288 aa). Ser995 serves as the catalytic For acyl/malonyl transferase activity. The segment at 1307 to 1327 is disordered; sequence VQEAPAAKTETKKMSKLDPTK. Over residues 1315–1327 the composition is skewed to basic and acidic residues; sequence TETKKMSKLDPTK. Residues 1340-1483 are N-terminal hotdog fold; that stretch reads HKVIEEKTEP…CTVRFTTDSQ (144 aa). The PKS/mFAS DH domain occupies 1340–1658; that stretch reads HKVIEEKTEP…LRSVPRKALR (319 aa). The tract at residues 1353 to 1658 is product template (PT) domain; that stretch reads QFTVETDISR…LRSVPRKALR (306 aa). His1372 serves as the catalytic Proton acceptor; for dehydratase activity. Residues 1510–1658 form a C-terminal hotdog fold region; the sequence is LTHYNTKSGY…LRSVPRKALR (149 aa). Asp1570 serves as the catalytic Proton donor; for dehydratase activity. The disordered stretch occupies residues 1665–1734; the sequence is MDKGIRQRGG…AALKASVPKA (70 aa). A compositionally biased stretch (low complexity) spans 1677–1698; that stretch reads GAAKGAVAAPAPAKKMVEPVKA. The segment covering 1708 to 1723 has biased composition (pro residues); sequence AAPPSPSKAAPPPAPK. The span at 1724–1734 shows a compositional bias: low complexity; sequence PAALKASVPKA. Carrier domains follow at residues 1733-1812, 1877-1953, and 2020-2099; these read KADP…AGAA, SKVF…GGSG, and VART…TGSS. An O-(pantetheine 4'-phosphoryl)serine mark is found at Ser1770, Ser1911, and Ser2057. Positions 2098-2115 are enriched in low complexity; that stretch reads SSADSDSSSVASNPADPA. Residues 2098–2149 form a disordered region; sequence SSADSDSSSVASNPADPAATPPRSESSDTEPDDEAPSKPKSGPGSTDSCRST. Residues 2140–2149 are compositionally biased toward polar residues; sequence PGSTDSCRST. Positions 2164 to 2393 are thioesterase/Claisen cyclase (TE/CLC) domain; that stretch reads TLFLLPDGGG…KARVNYVSDL (230 aa). Ser2234 acts as the For thioesterase activity in catalysis.

It depends on pantetheine 4'-phosphate as a cofactor.

It catalyses the reaction hexanoyl-[ACP] + 7 malonyl-CoA + 6 H(+) = noranthrone + holo-[ACP] + 7 CO2 + 7 CoA + 2 H2O. It functions in the pathway mycotoxin biosynthesis. In terms of biological role, polyketide synthase; part of the fragmented gene cluster that mediates the biosynthesis of dothistromin (DOTH), a polyketide toxin very similar in structure to the aflatoxin precursor, versicolorin B. The first step of the pathway is the conversion of acetate to norsolorinic acid (NOR) and requires the fatty acid synthase subunits hexA and hexB, as well as the polyketide synthase pksA. PksA combines a hexanoyl starter unit and 7 malonyl-CoA extender units to synthesize the precursor NOR. The hexanoyl starter unit is provided to the acyl-carrier protein (ACP) domain by the fungal fatty acid synthase hexA/hexB. The second step is the conversion of NOR to averantin (AVN) and requires the norsolorinic acid ketoreductase nor1, which catalyzes the dehydration of norsolorinic acid to form (1'S)-averantin. The cytochrome P450 monooxygenase avnA then catalyzes the hydroxylation of AVN to 5'hydroxyaverantin (HAVN). The next step is performed by adhA that transforms HAVN to averufin (AVF). Averufin might then be converted to hydroxyversicolorone by cypX and avfA. Hydroxyversicolorone is further converted versiconal hemiacetal acetate (VHA) by moxY. VHA is then the substrate for the versiconal hemiacetal acetate esterase est1 to yield versiconal (VAL). Versicolorin B synthase vbsA then converts VAL to versicolorin B (VERB) by closing the bisfuran ring. Then, the activity of the versicolorin B desaturase verB leads to versicolorin A (VERA). DotB, a predicted chloroperoxidase, may perform epoxidation of the A-ring of VERA. Alternatively, a cytochrome P450, such as cypX or avnA could catalyze this step. It is also possible that another, uncharacterized, cytochrome P450 enzyme is responsible for this step. Opening of the epoxide could potentially be achieved by the epoxide hydrolase epoA. However, epoA seems not to be required for DOTH biosynthesis, but other epoxide hydrolases may have the ability to complement this hydrolysis. Alternatively, opening of the epoxide ring could be achieved non-enzymatically. The next step is the deoxygenation of ring A to yield the 5,8-dihydroxyanthraquinone which is most likely catalyzed by the NADPH dehydrogenase encoded by ver1. The last stages of DOTH biosynthesis are proposed to involve hydroxylation of the bisfuran. OrdB and norB might have oxidative roles here. An alternative possibility is that cytochrome P450 monoogenases such as avnA and cypX might perform these steps in addition to previously proposed steps. The chain is Norsolorinic acid synthase from Dothistroma septosporum (Red band needle blight fungus).